The primary structure comprises 292 residues: Zinc finger protein OZF (292 aa).

C2H2-type zinc fingers lie at residues 16 to 38 (FACK…EHFH), 44 to 66 (FECN…QNTH), 72 to 94 (FECN…QKIH), 100 to 122 (FECK…QRTH), 128 to 150 (FVCK…EKIH), 156 to 178 (FKCS…QNIH), 184 to 206 (YECN…VRIH), 212 to 234 (YECN…VRSH), 240 to 262 (YGCN…LRIH), and 268 to 290 (YQCS…QKIH). Residues lysine 28, lysine 51, and lysine 56 each participate in a glycyl lysine isopeptide (Lys-Gly) (interchain with G-Cter in SUMO2) cross-link. Glycyl lysine isopeptide (Lys-Gly) (interchain with G-Cter in SUMO) cross-links involve residues lysine 157 and lysine 169. Residue lysine 173 forms a Glycyl lysine isopeptide (Lys-Gly) (interchain with G-Cter in SUMO2) linkage. An interaction with TERF2IP region spans residues 212–292 (YECNVCGKAF…HIRHQKIHTH (81 aa)).

Belongs to the krueppel C2H2-type zinc-finger protein family. In terms of assembly, binds DNA. Interacts with SUMO conjugating enzyme UBC9/UBE2I. Interacts with the telomeric protein TERF2IP. In terms of processing, sumoylated. In terms of tissue distribution, liver, skeletal and heart muscle, mammary cells. Very low levels in brain, lung, placenta and kidney. Strongly overexpressed in many pancreas and colorectal cancers. Increased gene copy numbers are detected in 3 of 12 tumor cell lines and 2 of 12 primary pancreatic carcinomas. Overexpressed in 80% of colorectal cancers.

It is found in the nucleus. This Homo sapiens (Human) protein is Zinc finger protein OZF (ZNF146).